Reading from the N-terminus, the 895-residue chain is Stonin-2 (895 aa).

Disordered stretches follow at residues 15-119 (WVSF…PPHK), 145-222 (SESS…APPV), and 234-280 (EDNE…KSTL). A compositionally biased stretch (basic and acidic residues) spans 64 to 73 (SHSEQDDSSE). Residues 145 to 193 (SESSWTTHSEDTSSPSVAPSYTDLQLINTEEQASGRASGTDSTDNSSSL) show a composition bias toward polar residues. Pro residues predominate over residues 241 to 251 (PSPPVPSPKKP). Phosphothreonine is present on T253. S278 and S299 each carry phosphoserine. 2 short sequence motifs (NPF) span residues 310 to 312 (NPF) and 326 to 328 (NPF). Positions 386-421 (QIDDPDPVGNTALPDDDPTASVELDAPSPASALSQP) are disordered. The SHD domain occupies 424–557 (GWPMMLRIPE…DLPVLSMDLS (134 aa)). Positions 565-872 (EEEITVDVRD…AHYSYKVEIE (308 aa)) constitute an MHD domain. Residue S759 is modified to Phosphoserine.

It belongs to the Stoned B family. As to quaternary structure, interacts with the second C2 domain of synaptotagmins SYT1 and SYT2. Interacts with EPS15, EPS15R and ITSN1. Interacts indirectly with the AP-2 adapter complex. Interacts with TOR1A and COPS4; the interaction controls STON2 protein stability. Phosphorylated in vitro by PKD. In terms of processing, neddylated; deneddylated via its interaction with the COP9 signalosome (CSN) complex through TOR1A and COPS4. Post-translationally, ubiquitinated; leading to its degradation.

It localises to the cytoplasm. The protein localises to the membrane. It is found in the synapse. The protein resides in the synaptosome. In terms of biological role, adapter protein involved in endocytic machinery. Involved in the synaptic vesicle recycling. May facilitate clathrin-coated vesicle uncoating. The polypeptide is Stonin-2 (Ston2) (Mus musculus (Mouse)).